We begin with the raw amino-acid sequence, 242 residues long: Carboxy-S-adenosyl-L-methionine synthase (242 aa).

Residues tyrosine 39, 64 to 66 (GCS), 89 to 90 (DN), 117 to 118 (DI), asparagine 132, and arginine 199 contribute to the S-adenosyl-L-methionine site.

This sequence belongs to the class I-like SAM-binding methyltransferase superfamily. Cx-SAM synthase family. Homodimer.

It carries out the reaction prephenate + S-adenosyl-L-methionine = carboxy-S-adenosyl-L-methionine + 3-phenylpyruvate + H2O. In terms of biological role, catalyzes the conversion of S-adenosyl-L-methionine (SAM) to carboxy-S-adenosyl-L-methionine (Cx-SAM). In Vibrio atlanticus (strain LGP32) (Vibrio splendidus (strain Mel32)), this protein is Carboxy-S-adenosyl-L-methionine synthase.